Here is a 3313-residue protein sequence, read N- to C-terminus: PHD finger protein rhinoceros (3313 aa).

Positions 1-16 (MSQRGKRGNQHHHQSH) are enriched in basic residues. Residues 1 to 136 (MSQRGKRGNQ…QGASTSSSWQ (136 aa)) are disordered. 2 stretches are compositionally biased toward low complexity: residues 42–71 (PPNG…ATGG) and 100–134 (LGAA…TSSS). A PHD-type 1 zinc finger spans residues 323-373 (NVICDVCRSPDSEEANEMVFCDNCNICVHQACYGITAIPSGQWLCRTCSMG). The segment at 375 to 409 (TPDCVLCPNKAGAMKSNKSGKHWAHVSCALWIPEV) adopts a C2HC pre-PHD-type zinc-finger fold. Residues 433–487 (LVCVLCRKRVGSCIQCSKHSMSKGKKENAGGASGGGSASVTSSMHKANKYATGTG) form a PHD-type 2; degenerate zinc finger. Disordered stretches follow at residues 453 to 526 (MSKG…ARAQ), 708 to 1076 (LQSG…TKAA), 1107 to 1842 (KEAK…PPSH), 1961 to 2033 (AQKE…TMGN), 2104 to 2136 (PVTA…RMQR), 2145 to 2164 (ARRS…PPAT), 2219 to 2252 (AAPQ…FNGG), 2353 to 2374 (PAYP…PAHP), 2398 to 2514 (VAAK…PPPM), 2563 to 2587 (TTRG…LHPV), 2647 to 2679 (ATGT…QPPA), 2827 to 2871 (SCGL…SSSR), 2888 to 2954 (LAGA…IKIR), 2978 to 2998 (YEMT…YSTP), 3017 to 3077 (DFDK…SATT), 3144 to 3233 (KAEK…SLPE), and 3259 to 3313 (YENS…CEVR). Residues 512-526 (KNDMTSEERNQARAQ) are compositionally biased toward basic and acidic residues. The span at 735–749 (KKLNNGAITSRTSSP) shows a compositional bias: polar residues. Positions 760 to 772 (STSTSTATATTAA) are enriched in low complexity. Residues 792–802 (GAATGTSTHNK) are compositionally biased toward polar residues. Low complexity-rich tracts occupy residues 803–861 (TQSQ…ASGI) and 894–912 (EAAA…ATSS). The span at 919-934 (QQRRRQEPERERDGRG) shows a compositional bias: basic and acidic residues. The segment covering 942–955 (TVPNRTQPTKSKQS) has biased composition (polar residues). The segment covering 956-972 (TQADAGSGAGTGAAVET) has biased composition (low complexity). A compositionally biased stretch (acidic residues) spans 994 to 1003 (ESLSSDESEE). The segment covering 1015-1025 (AALSSGLAASG) has biased composition (low complexity). Polar residues predominate over residues 1058–1072 (VESNVSDSQNQQTIR). 2 stretches are compositionally biased toward basic and acidic residues: residues 1159–1168 (AADRMREPES) and 1178–1205 (KLKD…KEQS). Residues 1250 to 1266 (EAKSTAPAAKPTAAKTS) show a composition bias toward low complexity. Residues 1285–1301 (LKSSKPLQDTTFSTANE) are compositionally biased toward polar residues. Low complexity-rich tracts occupy residues 1308–1324 (AATT…GVAT), 1377–1404 (SSSS…SGSD), and 1451–1464 (PAAS…AAAT). The span at 1475–1485 (TARTRQNSTNK) shows a compositional bias: polar residues. Over residues 1551–1579 (SPEKQTARRKSRADESPKKIPNLEHEINQ) the composition is skewed to basic and acidic residues. Over residues 1638-1650 (PVVEPEVETEIEP) the composition is skewed to acidic residues. The span at 1667-1678 (TAPTHTQLSANA) shows a compositional bias: polar residues. A compositionally biased stretch (pro residues) spans 1691–1702 (PAAPLPASPTPT). A compositionally biased stretch (basic residues) spans 1722-1734 (SRWRSRRRRRRRS). A coiled-coil region spans residues 1744–1773 (HTQHLLNEMEMARELEEERKNELLANASKY). Residues 1753-1765 (EMARELEEERKNE) show a composition bias toward basic and acidic residues. 2 stretches are compositionally biased toward polar residues: residues 1771-1781 (SKYSASTSSPA) and 1796-1805 (DSNSANSGGD). The span at 1806–1819 (QQQQQQQQPLPQQL) shows a compositional bias: low complexity. Residues 1823–1832 (SPSSEVASTI) show a composition bias toward polar residues. A compositionally biased stretch (low complexity) spans 1965–1984 (QQQQQQQQQQQQQQQQQQQQ). 2 stretches are compositionally biased toward polar residues: residues 1985–1999 (SCLY…SVAS) and 2007–2018 (MTANSGSYANSL). Residues 2019-2033 (TNTPNATPTNATMGN) are compositionally biased toward low complexity. Residues 2106-2118 (TAQSGAGSNSNKL) show a composition bias toward polar residues. Low complexity-rich tracts occupy residues 2148 to 2157 (SSSPSSVSES) and 2222 to 2242 (QQQT…QQQQ). Residues 2439–2451 (PVQPQPPTPPAPA) are compositionally biased toward pro residues. The segment covering 2479-2488 (GSGGSGAPGR) has biased composition (gly residues). Positions 2658-2679 (PAVSAAPVAPAPAPAANSQPPA) are enriched in low complexity. Positions 2891-2900 (ASGGGAGTAS) are enriched in gly residues. Residues 2909–2924 (CSSGSNNDNNGKTGAA) show a composition bias toward polar residues. Residues 2935-2946 (KTLESSEDDHQT) are compositionally biased toward basic and acidic residues. Over residues 3017–3026 (DFDKGEENNK) the composition is skewed to basic and acidic residues. A compositionally biased stretch (basic residues) spans 3046 to 3065 (KRPKSSKPKKDKKEKKRQKQ). Positions 3179–3198 (TSPQGLLLNSFTPHSQNANA) are enriched in polar residues. Residues 3268–3290 (SASGTGSASSNSCNSNSNNNNNN) show a composition bias toward low complexity. The span at 3291–3302 (GSGGGAASGGGS) shows a compositional bias: gly residues.

Belongs to the JADE family.

The protein localises to the nucleus. May function as a negative regulator of the EGFR/Ras/MAPK signaling pathway during eye development. The sequence is that of PHD finger protein rhinoceros (rno) from Drosophila pseudoobscura pseudoobscura (Fruit fly).